We begin with the raw amino-acid sequence, 676 residues long: Envelope fusion protein (676 aa).

Positions 1-16 are cleaved as a signal peptide; the sequence is MSPLALIVLLAWHATA. Residues N76 and N87 are each glycosylated (N-linked (GlcNAc...) asparagine; by host). A coiled-coil region spans residues 169–215; the sequence is ARELHDLAKTSNALNEQIKEVTDELVNIAKFEEHKQCLERQRDDLCG. 4 N-linked (GlcNAc...) asparagine; by host glycosylation sites follow: N266, N469, N505, and N548. Residues 577–597 traverse the membrane as a helical segment; that stretch reads CATAEAVVACVVLFLVALLLF. N-linked (GlcNAc...) asparagine; by host glycosylation occurs at N628.

N-glycosylated.

Its subcellular location is the virion membrane. The protein localises to the host cell membrane. Its function is as follows. Envelope glycoprotein which mediates the fusion of viral and host endosomal membranes leading to virus entry into the host cell. The sequence is that of Envelope fusion protein from Lepidoptera (butterflies and moths).